A 258-amino-acid polypeptide reads, in one-letter code: Protein OS-9 homolog (258 aa).

The first 18 residues, 1–18, serve as a signal peptide directing secretion; that stretch reads MNWTSLVYLWFIFKSIFA. Asparagine 2, asparagine 51, and asparagine 70 each carry an N-linked (GlcNAc...) asparagine glycan. One can recognise an MRH domain in the interval 114–237; that stretch reads TSCVFSFNLH…HINVPKLCSL (124 aa). Cysteine 116 and cysteine 132 are joined by a disulfide. Tryptophan 127 and glutamine 139 together coordinate a mannooligosaccharide derivative. Asparagine 165 carries N-linked (GlcNAc...) asparagine glycosylation. Disulfide bonds link cysteine 193/cysteine 223 and cysteine 208/cysteine 235. Residues aspartate 194, arginine 200, glutamate 219, and tyrosine 225 each coordinate a mannooligosaccharide derivative.

Belongs to the OS-9 family. As to quaternary structure, interacts with missfolded ER lumenal proteins.

It localises to the endoplasmic reticulum membrane. Functionally, lectin involved in the quality control of the secretory pathway. As a member of the endoplasmic reticulum-associated degradation lumenal (ERAD-L) surveillance system, targets misfolded endoplasmic reticulum lumenal glycoproteins for degradation. The polypeptide is Protein OS-9 homolog (YOS9) (Candida albicans (strain SC5314 / ATCC MYA-2876) (Yeast)).